The following is a 183-amino-acid chain: ATP synthase subunit b, chloroplastic (183 aa).

Residues 27–49 traverse the membrane as a helical segment; it reads LATNLINLTVVVGVLIFFGKGVL.

It belongs to the ATPase B chain family. As to quaternary structure, F-type ATPases have 2 components, F(1) - the catalytic core - and F(0) - the membrane proton channel. F(1) has five subunits: alpha(3), beta(3), gamma(1), delta(1), epsilon(1). F(0) has four main subunits: a(1), b(1), b'(1) and c(10-14). The alpha and beta chains form an alternating ring which encloses part of the gamma chain. F(1) is attached to F(0) by a central stalk formed by the gamma and epsilon chains, while a peripheral stalk is formed by the delta, b and b' chains.

It is found in the plastid. The protein localises to the chloroplast thylakoid membrane. Its function is as follows. F(1)F(0) ATP synthase produces ATP from ADP in the presence of a proton or sodium gradient. F-type ATPases consist of two structural domains, F(1) containing the extramembraneous catalytic core and F(0) containing the membrane proton channel, linked together by a central stalk and a peripheral stalk. During catalysis, ATP synthesis in the catalytic domain of F(1) is coupled via a rotary mechanism of the central stalk subunits to proton translocation. In terms of biological role, component of the F(0) channel, it forms part of the peripheral stalk, linking F(1) to F(0). The protein is ATP synthase subunit b, chloroplastic of Brachypodium distachyon (Purple false brome).